A 209-amino-acid polypeptide reads, in one-letter code: Glutathione S-transferase 1, isoform C (209 aa).

One can recognise a GST N-terminal domain in the interval 1–80; sequence MDFYYLPGSA…YLAEKYGKDD (80 aa). Residues S9, 50–52, and 64–66 contribute to the glutathione site; these read HCI and ESR. The region spanning 86-207 is the GST C-terminal domain; it reads DPQKRAVVNQ…AGIEEFKKYF (122 aa).

Belongs to the GST superfamily. Theta family. Homodimer.

The catalysed reaction is RX + glutathione = an S-substituted glutathione + a halide anion + H(+). It catalyses the reaction 1,1,1-trichloro-2,2-bis(4-chlorophenyl)ethane = 1,1-dichloro-2,2-bis(4-chlorophenyl)ethylene + chloride + H(+). Its function is as follows. Conjugation of reduced glutathione to a wide number of exogenous and endogenous hydrophobic electrophiles. Has DDT dehydrochlorinase activity. This is Glutathione S-transferase 1, isoform C (GstD1) from Anopheles gambiae (African malaria mosquito).